We begin with the raw amino-acid sequence, 446 residues long: RUN domain-containing protein 3A (446 aa).

Residues 1 to 298 (METSFVQTTM…LQLQLEEAAA (298 aa)) form an interaction with RAP2A region. Residues 52 to 189 (DDSSEEFVNF…IDFSFCLKGE (138 aa)) enclose the RUN domain. Thr-215 carries the post-translational modification Phosphothreonine. Positions 216 to 239 (DEEERHSAESSTSEDNSPEHPYLP) are disordered. Ser-232 is modified (phosphoserine). Positions 267 to 322 (YLEELVRLRESQLKDLEAENRRLQLQLEEAAAQNQREKRELEGVILELQEQLTGLI) form a coiled coil. Polar residues predominate over residues 372 to 384 (PLSAEASLSSDSQ). The tract at residues 372–404 (PLSAEASLSSDSQRLGEGTRDEEPWGPIGKDPT) is disordered. Residues Ser-416 and Ser-419 each carry the phosphoserine modification.

It belongs to the RUNDC3 family. Interacts with the GTP-bound form of RAP2A.

Functionally, may act as an effector of RAP2A in neuronal cells. This Pongo abelii (Sumatran orangutan) protein is RUN domain-containing protein 3A (RUNDC3A).